Here is a 402-residue protein sequence, read N- to C-terminus: Plasminogen activator inhibitor 1 (402 aa).

A signal peptide spans 1–23; sequence MRMSPVFACLALGLALIFGEGSA. N-linked (GlcNAc...) asparagine glycosylation is found at Asn232, Asn288, and Asn352.

The protein belongs to the serpin family. As to quaternary structure, forms a heterodimer with TMPRSS7. Interacts with VTN. Binds LRP1B; binding is followed by internalization and degradation. Interacts with PPP1CB. In complex with PLAU/uPA, interacts with PLAUR/uPAR. Interacts with SORL1 and LRP1, either alone or in complex with PLAU; these interactions are abolished in the presence of LRPAP1/RAP. The ternary complex composed of PLAUR-PLAU-PAI1 also interacts with SORL1. Interacts with PLAT/tPA. Also interacts with SORL1, when complexed to PLAT/tPA. As to expression, vascular endothelial cells may be the primary site of synthesis of plasma PAI1.

The protein localises to the secreted. In terms of biological role, serine protease inhibitor. Inhibits TMPRSS7. Is a primary inhibitor of tissue-type plasminogen activator (PLAT) and urokinase-type plasminogen activator (PLAU). As PLAT inhibitor, it is required for fibrinolysis down-regulation and is responsible for the controlled degradation of blood clots. As PLAU inhibitor, it is involved in the regulation of cell adhesion and spreading. Acts as a regulator of cell migration, independently of its role as protease inhibitor. It is required for stimulation of keratinocyte migration during cutaneous injury repair. It is involved in cellular and replicative senescence. Plays a role in alveolar type 2 cells senescence in the lung. Is involved in the regulation of cementogenic differentiation of periodontal ligament stem cells, and regulates odontoblast differentiation and dentin formation during odontogenesis. This is Plasminogen activator inhibitor 1 (SERPINE1) from Bos taurus (Bovine).